We begin with the raw amino-acid sequence, 541 residues long: Chaperonin GroEL (541 aa).

ATP is bound by residues 29–32 (TLGP), 86–90 (DGTTT), Gly413, 480–482 (NAA), and Asp496.

This sequence belongs to the chaperonin (HSP60) family. Forms a cylinder of 14 subunits composed of two heptameric rings stacked back-to-back. Interacts with the co-chaperonin GroES.

The protein localises to the cytoplasm. It carries out the reaction ATP + H2O + a folded polypeptide = ADP + phosphate + an unfolded polypeptide.. Functionally, together with its co-chaperonin GroES, plays an essential role in assisting protein folding. The GroEL-GroES system forms a nano-cage that allows encapsulation of the non-native substrate proteins and provides a physical environment optimized to promote and accelerate protein folding. In Gardnerella vaginalis, this protein is Chaperonin GroEL.